Consider the following 79-residue polypeptide: Sec-independent protein translocase protein TatA (79 aa).

The chain crosses the membrane as a helical span at residues 1–21; sequence MGGISIWQLLIIALIVVLLFG. The tract at residues 43–79 is disordered; the sequence is MSSEEDKKALEDTEAAKTAQTTQQATEKKPESNKEQA. The segment covering 46–57 has biased composition (basic and acidic residues); that stretch reads EEDKKALEDTEA. Positions 58–67 are enriched in low complexity; that stretch reads AKTAQTTQQA. Residues 68 to 79 show a composition bias toward basic and acidic residues; that stretch reads TEKKPESNKEQA.

The protein belongs to the TatA/E family. As to quaternary structure, the Tat system comprises two distinct complexes: a TatABC complex, containing multiple copies of TatA, TatB and TatC subunits, and a separate TatA complex, containing only TatA subunits. Substrates initially bind to the TatABC complex, which probably triggers association of the separate TatA complex to form the active translocon.

The protein localises to the cell inner membrane. In terms of biological role, part of the twin-arginine translocation (Tat) system that transports large folded proteins containing a characteristic twin-arginine motif in their signal peptide across membranes. TatA could form the protein-conducting channel of the Tat system. The chain is Sec-independent protein translocase protein TatA from Shewanella putrefaciens (strain CN-32 / ATCC BAA-453).